The sequence spans 145 residues: Protein SprT-like (145 aa).

The SprT-like domain maps to aspartate 5–isoleucine 140. Histidine 64 provides a ligand contact to Zn(2+). Glutamate 65 is an active-site residue. Histidine 68 contributes to the Zn(2+) binding site.

Belongs to the SprT family. Requires Zn(2+) as cofactor.

It is found in the cytoplasm. The polypeptide is Protein SprT-like (Streptococcus equi subsp. zooepidemicus (strain MGCS10565)).